The following is a 463-amino-acid chain: L-seryl-tRNA(Sec) selenium transferase (463 aa).

An N6-(pyridoxal phosphate)lysine modification is found at K295.

Belongs to the SelA family. In terms of assembly, homodecamer; pentamer of dimers. Binds only one seryl-tRNA(Sec) per dimer. Pyridoxal 5'-phosphate is required as a cofactor.

The protein resides in the cytoplasm. The enzyme catalyses L-seryl-tRNA(Sec) + selenophosphate + H(+) = L-selenocysteinyl-tRNA(Sec) + phosphate. It functions in the pathway aminoacyl-tRNA biosynthesis; selenocysteinyl-tRNA(Sec) biosynthesis; selenocysteinyl-tRNA(Sec) from L-seryl-tRNA(Sec) (bacterial route): step 1/1. Its function is as follows. Converts seryl-tRNA(Sec) to selenocysteinyl-tRNA(Sec) required for selenoprotein biosynthesis. In Shigella flexneri, this protein is L-seryl-tRNA(Sec) selenium transferase.